We begin with the raw amino-acid sequence, 446 residues long: MSDKRRYFGTDGVRGKVGQYPITPDFVLKLGWAAGRVLAKQGTKKVIIGKDTRISGYMLESALEAGLAAAGLKATFTGPMPTPAVAYLTQTFRAEAGIVISASHNPYYDNGIKFFSSEGTKLPDDIELAIEAELDKEIECVESAELGKATRLNDAAGRYIEFCKSTFPSELSLAKLKIVVDCANGATYHIAPNVFTELGADVIAMGVTPNGTNINHEVGATDVRALQQRVVEEQADLGLAFDGDGDRIIMVDHLGNKVDGDQIAYIIARDALRRGELKGGVVGTLMTNLGMENGLKQLGIPFVRAAVGDRYVMEKLLEKGWKIGAENSGHVILLDKVTTGDAIVAALQVLASVVGSELSLNELSKGMTLYPQVLENVRFAGQGNPLEAEAVKKTVEDVEADLGSKGRVLLRKSGTEPLIRVMVEGEDGELVQNSALKIAQAVKDNC.

The active-site Phosphoserine intermediate is Ser103. Mg(2+) is bound by residues Ser103, Asp242, Asp244, and Asp246. The residue at position 103 (Ser103) is a Phosphoserine.

This sequence belongs to the phosphohexose mutase family. The cofactor is Mg(2+). Activated by phosphorylation.

It carries out the reaction alpha-D-glucosamine 1-phosphate = D-glucosamine 6-phosphate. Its function is as follows. Catalyzes the conversion of glucosamine-6-phosphate to glucosamine-1-phosphate. In Vibrio vulnificus (strain CMCP6), this protein is Phosphoglucosamine mutase.